The following is a 282-amino-acid chain: Bis(5'-nucleosyl)-tetraphosphatase, symmetrical (282 aa).

Belongs to the Ap4A hydrolase family.

The enzyme catalyses P(1),P(4)-bis(5'-adenosyl) tetraphosphate + H2O = 2 ADP + 2 H(+). In terms of biological role, hydrolyzes diadenosine 5',5'''-P1,P4-tetraphosphate to yield ADP. This is Bis(5'-nucleosyl)-tetraphosphatase, symmetrical from Salmonella arizonae (strain ATCC BAA-731 / CDC346-86 / RSK2980).